The chain runs to 1053 residues: DNA-directed RNA polymerase subunit beta' (1053 aa).

Positions 60, 62, 75, and 78 each coordinate Zn(2+). Mg(2+) contacts are provided by D449, D451, and D453.

The protein belongs to the RNA polymerase beta' chain family. As to quaternary structure, the RNAP catalytic core consists of 2 alpha, 1 beta, 1 beta' and 1 omega subunit. When a sigma factor is associated with the core the holoenzyme is formed, which can initiate transcription. Mg(2+) is required as a cofactor. Zn(2+) serves as cofactor.

The catalysed reaction is RNA(n) + a ribonucleoside 5'-triphosphate = RNA(n+1) + diphosphate. DNA-dependent RNA polymerase catalyzes the transcription of DNA into RNA using the four ribonucleoside triphosphates as substrates. The sequence is that of DNA-directed RNA polymerase subunit beta' from Brochothrix thermosphacta (Microbacterium thermosphactum).